The following is a 777-amino-acid chain: Endonuclease MutS2 (777 aa).

328 to 335 (GPNTGGKT) contributes to the ATP binding site. The 76-residue stretch at 702–777 (LDLRGKRYEE…GSGATIVIFK (76 aa)) folds into the Smr domain.

Belongs to the DNA mismatch repair MutS family. MutS2 subfamily. In terms of assembly, homodimer. Binds to stalled ribosomes, contacting rRNA.

Endonuclease that is involved in the suppression of homologous recombination and thus may have a key role in the control of bacterial genetic diversity. In terms of biological role, acts as a ribosome collision sensor, splitting the ribosome into its 2 subunits. Detects stalled/collided 70S ribosomes which it binds and splits by an ATP-hydrolysis driven conformational change. Acts upstream of the ribosome quality control system (RQC), a ribosome-associated complex that mediates the extraction of incompletely synthesized nascent chains from stalled ribosomes and their subsequent degradation. Probably generates substrates for RQC. The polypeptide is Endonuclease MutS2 (Streptococcus gordonii (strain Challis / ATCC 35105 / BCRC 15272 / CH1 / DL1 / V288)).